The primary structure comprises 388 residues: Beta-1,4-galactosyltransferase 5 (388 aa).

Over 1–14 (MRVRRGLLRLPRRS) the chain is Cytoplasmic. A helical; Signal-anchor for type II membrane protein transmembrane segment spans residues 15–35 (LLAALFFFSLSSSLLYFVYVA). The Lumenal portion of the chain corresponds to 36-388 (PGIVNTYLFM…TPELAQVTEY (353 aa)). N-linked (GlcNAc...) asparagine glycans are attached at residues asparagine 77, asparagine 81, asparagine 90, asparagine 111, and asparagine 128. A disulfide bond links cysteine 114 and cysteine 158. UDP-alpha-D-galactose is bound by residues 169-173 (PFRNR), 208-210 (FNR), 235-236 (VD), tyrosine 264, and tryptophan 296. Cysteine 229 and cysteine 248 are joined by a disulfide. Aspartate 236 is a Mn(2+) binding site. 298–301 (GEDD) serves as a coordination point for N-acetyl-D-glucosamine. 329–330 (YH) contacts UDP-alpha-D-galactose. Arginine 340 contributes to the N-acetyl-D-glucosamine binding site. N-linked (GlcNAc...) asparagine glycosylation is found at asparagine 364 and asparagine 373.

Belongs to the glycosyltransferase 7 family. As to quaternary structure, (Microbial infection) Interacts with porcine reproductive and respiratory syndrome virus GP5. Mn(2+) serves as cofactor.

The protein resides in the golgi apparatus. The protein localises to the golgi stack membrane. It carries out the reaction a beta-D-glucosyl-(1&lt;-&gt;1')-N-acylsphing-4-enine + UDP-alpha-D-galactose = a beta-D-Gal-(1-&gt;4)-beta-D-Glc-(1&lt;-&gt;1)-Cer(d18:1(4E)) + UDP + H(+). It functions in the pathway protein modification; protein glycosylation. It participates in sphingolipid metabolism. Its function is as follows. Catalyzes the synthesis of lactosylceramide (LacCer) via the transfer of galactose from UDP-galactose to glucosylceramide (GlcCer). LacCer is the starting point in the biosynthesis of all gangliosides (membrane-bound glycosphingolipids) which play pivotal roles in the CNS including neuronal maturation and axonal and myelin formation. Plays a role in the glycosylation of BMPR1A and regulation of its protein stability. Essential for extraembryonic development during early embryogenesis. Functionally, (Microbial infection) May play a role in the glycosylation of porcine reproductive and respiratory syndrome virus GP5 protein and may be involved in the regulation of viral proliferation. The sequence is that of Beta-1,4-galactosyltransferase 5 (B4GALT5) from Sus scrofa (Pig).